Reading from the N-terminus, the 134-residue chain is ATP synthase epsilon chain, chloroplastic (134 aa).

The protein belongs to the ATPase epsilon chain family. F-type ATPases have 2 components, CF(1) - the catalytic core - and CF(0) - the membrane proton channel. CF(1) has five subunits: alpha(3), beta(3), gamma(1), delta(1), epsilon(1). CF(0) has three main subunits: a, b and c.

It is found in the plastid. The protein localises to the chloroplast thylakoid membrane. In terms of biological role, produces ATP from ADP in the presence of a proton gradient across the membrane. This chain is ATP synthase epsilon chain, chloroplastic, found in Drimys granadensis.